Here is a 227-residue protein sequence, read N- to C-terminus: Cytochrome c oxidase subunit 2 (227 aa).

The Mitochondrial intermembrane segment spans residues 1-14 (MAYPFELGFQDATS). Residues 15–45 (PIMEELLHFHDHTLMIVFLISSLVLYIISLM) traverse the membrane as a helical segment. Residues 46-59 (LTTKLTHTSTMDAQ) lie on the Mitochondrial matrix side of the membrane. A helical membrane pass occupies residues 60 to 87 (EIETIWTILPAIILILIALPSLRILYMM). Over 88–227 (DEINDPSLTV…HFENWSSSML (140 aa)) the chain is Mitochondrial intermembrane. The Cu cation site is built by His-161, Cys-196, Glu-198, Cys-200, His-204, and Met-207. A Mg(2+)-binding site is contributed by Glu-198.

Belongs to the cytochrome c oxidase subunit 2 family. As to quaternary structure, component of the cytochrome c oxidase (complex IV, CIV), a multisubunit enzyme composed of 14 subunits. The complex is composed of a catalytic core of 3 subunits MT-CO1, MT-CO2 and MT-CO3, encoded in the mitochondrial DNA, and 11 supernumerary subunits COX4I, COX5A, COX5B, COX6A, COX6B, COX6C, COX7A, COX7B, COX7C, COX8 and NDUFA4, which are encoded in the nuclear genome. The complex exists as a monomer or a dimer and forms supercomplexes (SCs) in the inner mitochondrial membrane with NADH-ubiquinone oxidoreductase (complex I, CI) and ubiquinol-cytochrome c oxidoreductase (cytochrome b-c1 complex, complex III, CIII), resulting in different assemblies (supercomplex SCI(1)III(2)IV(1) and megacomplex MCI(2)III(2)IV(2)). Found in a complex with TMEM177, COA6, COX18, COX20, SCO1 and SCO2. Interacts with TMEM177 in a COX20-dependent manner. Interacts with COX20. Interacts with COX16. Requires Cu cation as cofactor.

The protein localises to the mitochondrion inner membrane. The enzyme catalyses 4 Fe(II)-[cytochrome c] + O2 + 8 H(+)(in) = 4 Fe(III)-[cytochrome c] + 2 H2O + 4 H(+)(out). Functionally, component of the cytochrome c oxidase, the last enzyme in the mitochondrial electron transport chain which drives oxidative phosphorylation. The respiratory chain contains 3 multisubunit complexes succinate dehydrogenase (complex II, CII), ubiquinol-cytochrome c oxidoreductase (cytochrome b-c1 complex, complex III, CIII) and cytochrome c oxidase (complex IV, CIV), that cooperate to transfer electrons derived from NADH and succinate to molecular oxygen, creating an electrochemical gradient over the inner membrane that drives transmembrane transport and the ATP synthase. Cytochrome c oxidase is the component of the respiratory chain that catalyzes the reduction of oxygen to water. Electrons originating from reduced cytochrome c in the intermembrane space (IMS) are transferred via the dinuclear copper A center (CU(A)) of subunit 2 and heme A of subunit 1 to the active site in subunit 1, a binuclear center (BNC) formed by heme A3 and copper B (CU(B)). The BNC reduces molecular oxygen to 2 water molecules using 4 electrons from cytochrome c in the IMS and 4 protons from the mitochondrial matrix. The chain is Cytochrome c oxidase subunit 2 (MT-CO2) from Tamias townsendii (Townsend's chipmunk).